Here is a 333-residue protein sequence, read N- to C-terminus: Ribosomal RNA small subunit methyltransferase C (333 aa).

Belongs to the methyltransferase superfamily. RsmC family. Monomer.

It is found in the cytoplasm. It carries out the reaction guanosine(1207) in 16S rRNA + S-adenosyl-L-methionine = N(2)-methylguanosine(1207) in 16S rRNA + S-adenosyl-L-homocysteine + H(+). Its function is as follows. Specifically methylates the guanine in position 1207 of 16S rRNA in the 30S particle. The polypeptide is Ribosomal RNA small subunit methyltransferase C (Mannheimia succiniciproducens (strain KCTC 0769BP / MBEL55E)).